The sequence spans 408 residues: MRVREELVSRFFRYAAIESQSNGRSQSLPSSPGQAALAALLADEMRAIGLEDVCIDAHAIVTGVKRGNRPAAPPIGFIAHLDTVDVGLSPFVRPQVLRFEGEDLCINRQEDIWLRVAEHPEILDWLGEDIIVGDGTSVLGADNKAAIAVIMTLLGRLDHEVGHGDVFVAFVPDEEIGMRGAKAMDVSRFPCDFAYTIDCCELGEVVLETFNAASCEIVFTGVSAHPMSAKGMLVNPLLMAMDFISHFDRKETPECTEGRDGFYWFKDLIANDSVASLTALIRDFDTDGFNRRKHRIAAVAEQMRSRYPTGNVRYQITDTYRNVSTSLARDERAVALLFKAMEELGIGKKVIAMRGGTDGAVLSAKGIPTPNFFTGAYNFHSRYEFLPVPAFERSLEVALKVCQLAATE.

His80 provides a ligand contact to Zn(2+). Asp82 is an active-site residue. Asp142 lines the Zn(2+) pocket. Glu174 acts as the Proton acceptor in catalysis. 3 residues coordinate Zn(2+): Glu175, Asp198, and His380.

The protein belongs to the peptidase M20B family. Zn(2+) is required as a cofactor.

This is Peptidase T-like protein RB0614 from Rhizobium meliloti (strain 1021) (Ensifer meliloti).